We begin with the raw amino-acid sequence, 511 residues long: Maturase K (511 aa).

The protein belongs to the intron maturase 2 family. MatK subfamily.

It is found in the plastid. It localises to the chloroplast. Its function is as follows. Usually encoded in the trnK tRNA gene intron. Probably assists in splicing its own and other chloroplast group II introns. This chain is Maturase K, found in Bromus inermis (Smooth brome grass).